A 334-amino-acid chain; its full sequence is Putative B3 domain-containing protein At5g66980 (334 aa).

DNA-binding regions (TF-B3) lie at residues 8 to 105 and 218 to 317; these read LQFF…FAND and HPHF…VSGR.

The protein localises to the nucleus. The sequence is that of Putative B3 domain-containing protein At5g66980 from Arabidopsis thaliana (Mouse-ear cress).